We begin with the raw amino-acid sequence, 366 residues long: Alanine racemase (366 aa).

K33 acts as the Proton acceptor; specific for D-alanine in catalysis. At K33 the chain carries N6-(pyridoxal phosphate)lysine. Substrate is bound at residue R129. Y253 functions as the Proton acceptor; specific for L-alanine in the catalytic mechanism. Substrate is bound at residue M301.

It belongs to the alanine racemase family. Pyridoxal 5'-phosphate serves as cofactor.

It catalyses the reaction L-alanine = D-alanine. The protein operates within amino-acid biosynthesis; D-alanine biosynthesis; D-alanine from L-alanine: step 1/1. Functionally, catalyzes the interconversion of L-alanine and D-alanine. May also act on other amino acids. The sequence is that of Alanine racemase (alr) from Xanthomonas oryzae pv. oryzae (strain MAFF 311018).